The sequence spans 352 residues: Protein-glutamate methylesterase/protein-glutamine glutaminase 2 (352 aa).

The Response regulatory domain occupies 1–116; sequence MVVDDSAVVR…KQFLTDSADE (116 aa). D50 bears the 4-aspartylphosphate mark. The CheB-type methylesterase domain occupies 162-352; it reads AQTTERIVAI…MAREIVTQLQ (191 aa). Active-site residues include S174, H200, and D296.

This sequence belongs to the CheB family. Phosphorylated by CheA. Phosphorylation of the N-terminal regulatory domain activates the methylesterase activity.

The protein localises to the cytoplasm. It catalyses the reaction [protein]-L-glutamate 5-O-methyl ester + H2O = L-glutamyl-[protein] + methanol + H(+). The catalysed reaction is L-glutaminyl-[protein] + H2O = L-glutamyl-[protein] + NH4(+). In terms of biological role, involved in chemotaxis. Part of a chemotaxis signal transduction system that modulates chemotaxis in response to various stimuli. Catalyzes the demethylation of specific methylglutamate residues introduced into the chemoreceptors (methyl-accepting chemotaxis proteins or MCP) by CheR. Also mediates the irreversible deamidation of specific glutamine residues to glutamic acid. This Xanthomonas campestris pv. campestris (strain ATCC 33913 / DSM 3586 / NCPPB 528 / LMG 568 / P 25) protein is Protein-glutamate methylesterase/protein-glutamine glutaminase 2.